The chain runs to 350 residues: Ketol-acid reductoisomerase (NADP(+)) (350 aa).

In terms of domain architecture, KARI N-terminal Rossmann spans Val4–Thr187. Residues Tyr30–Gln33, Arg53, Thr58, and Asp88–Gln91 contribute to the NADP(+) site. The active site involves His113. Gly139 contacts NADP(+). Residues Thr188–Leu333 enclose the KARI C-terminal knotted domain. Positions 196, 200, 232, and 236 each coordinate Mg(2+). Ser257 lines the substrate pocket.

It belongs to the ketol-acid reductoisomerase family. It depends on Mg(2+) as a cofactor.

The enzyme catalyses (2R)-2,3-dihydroxy-3-methylbutanoate + NADP(+) = (2S)-2-acetolactate + NADPH + H(+). It catalyses the reaction (2R,3R)-2,3-dihydroxy-3-methylpentanoate + NADP(+) = (S)-2-ethyl-2-hydroxy-3-oxobutanoate + NADPH + H(+). It participates in amino-acid biosynthesis; L-isoleucine biosynthesis; L-isoleucine from 2-oxobutanoate: step 2/4. Its pathway is amino-acid biosynthesis; L-valine biosynthesis; L-valine from pyruvate: step 2/4. In terms of biological role, involved in the biosynthesis of branched-chain amino acids (BCAA). Catalyzes an alkyl-migration followed by a ketol-acid reduction of (S)-2-acetolactate (S2AL) to yield (R)-2,3-dihydroxy-isovalerate. In the isomerase reaction, S2AL is rearranged via a Mg-dependent methyl migration to produce 3-hydroxy-3-methyl-2-ketobutyrate (HMKB). In the reductase reaction, this 2-ketoacid undergoes a metal-dependent reduction by NADPH to yield (R)-2,3-dihydroxy-isovalerate. This chain is Ketol-acid reductoisomerase (NADP(+)), found in Xylella fastidiosa (strain 9a5c).